Here is a 149-residue protein sequence, read N- to C-terminus: MKSTLRISLKSGERIFINGAVLRVDRKVALEFLNDVTFLLENHVLQPEDANTPLRQLYFIAQMILINPEGKEQTLTMFRKSIVMLLSCFQDDEILAELKRIDAQVVSGRAFDALKAIRGLYPLEDRILNNQEMAPATIEQIRKEIAPWR.

This sequence belongs to the FlbT family.

In terms of biological role, has a post-transcriptional repressor function in flagellum biogenesis. Associates with the 5'-UTR of fljK mRNA and promotes its degradation. In Allorhizobium ampelinum (strain ATCC BAA-846 / DSM 112012 / S4) (Agrobacterium vitis (strain S4)), this protein is Probable flagellum biosynthesis repressor protein FlbT.